A 368-amino-acid polypeptide reads, in one-letter code: MLYYLLHYFNSTYNPPGLGVVEYLTFRASAAAITSLLITLLAGPGFIRYLRSRFIEPVKEEAPAEHRKKKDLPTMGGLLIIFSIEVSVLLWSKFDDPHVWLIMLAVLWMGVVGFIDDYRKVVLKVKGGLSPRWKLVAQVALGLVVGIYTSLDPAFSVLMRETSVPFFKNLTIDYGYFYIPVVIFIITALSNAVNLTDGLDGLASGSSAIVVFALGGFAYLAGNAVYATYLSIPFIPGGGEIAVVCMAIVMASVGFLWFNSNPAEIFMGDTGSLALGSAIAVIALLIKQELLLPVLAGVFLLETLSVSVQVLYFKYTRMRFGQGRRIFLMAPLHHHFQLKGWAEQKIVIRFWIITILFFLTSLMTLKLR.

The next 9 membrane-spanning stretches (helical) occupy residues 30 to 50, 72 to 92, 98 to 118, 139 to 159, 170 to 190, 208 to 228, 238 to 258, 264 to 286, and 345 to 365; these read AAAITSLLITLLAGPGFIRYL, LPTMGGLLIIFSIEVSVLLWS, HVWLIMLAVLWMGVVGFIDDY, VALGLVVGIYTSLDPAFSVLM, LTIDYGYFYIPVVIFIITALS, AIVVFALGGFAYLAGNAVYAT, GGEIAVVCMAIVMASVGFLWF, EIFMGDTGSLALGSAIAVIALLI, and KIVIRFWIITILFFLTSLMTL.

This sequence belongs to the glycosyltransferase 4 family. MraY subfamily. Requires Mg(2+) as cofactor.

It is found in the cell inner membrane. The catalysed reaction is UDP-N-acetyl-alpha-D-muramoyl-L-alanyl-gamma-D-glutamyl-meso-2,6-diaminopimeloyl-D-alanyl-D-alanine + di-trans,octa-cis-undecaprenyl phosphate = di-trans,octa-cis-undecaprenyl diphospho-N-acetyl-alpha-D-muramoyl-L-alanyl-D-glutamyl-meso-2,6-diaminopimeloyl-D-alanyl-D-alanine + UMP. It functions in the pathway cell wall biogenesis; peptidoglycan biosynthesis. Catalyzes the initial step of the lipid cycle reactions in the biosynthesis of the cell wall peptidoglycan: transfers peptidoglycan precursor phospho-MurNAc-pentapeptide from UDP-MurNAc-pentapeptide onto the lipid carrier undecaprenyl phosphate, yielding undecaprenyl-pyrophosphoryl-MurNAc-pentapeptide, known as lipid I. In Chlorobium luteolum (strain DSM 273 / BCRC 81028 / 2530) (Pelodictyon luteolum), this protein is Phospho-N-acetylmuramoyl-pentapeptide-transferase.